The primary structure comprises 68 residues: Conotoxin Eb11.7 (68 aa).

The first 26 residues, Met1–Thr26, serve as a signal peptide directing secretion. 4 disulfide bridges follow: Cys29–Cys43, Cys36–Cys48, Cys42–Cys52, and Cys47–Cys56. Phenylalanine amide is present on Phe60. A propeptide spanning residues Ala64–Glu68 is cleaved from the precursor.

It belongs to the conotoxin I2 superfamily. As to expression, expressed by the venom duct.

Its subcellular location is the secreted. The protein is Conotoxin Eb11.7 of Conus eburneus (Ivory cone).